A 367-amino-acid chain; its full sequence is C-C chemokine receptor type 6 (367 aa).

Residues 1–39 (MNSTESYFGTDDYDNTEYYSIPPDHGPCSLEEVRNFTKV) are Extracellular-facing. Residues N2 and N35 are each glycosylated (N-linked (GlcNAc...) asparagine). Residues 40–66 (FVPIAYSLICVFGLLGNIMVVMTFAFY) form a helical membrane-spanning segment. The Cytoplasmic portion of the chain corresponds to 67 to 75 (KKARSMTDV). The chain crosses the membrane as a helical span at residues 76–96 (YLLNMAITDILFVLTLPFWAV). Over 97–111 (THATNTWVFSDALCK) the chain is Extracellular. The cysteines at positions 110 and 189 are disulfide-linked. A helical membrane pass occupies residues 112-133 (LMKGTYAVNFNCGMLLLACISM). At 134–151 (DRYIAIVQATKSFRVRSR) the chain is on the cytoplasmic side. Residues 152 to 172 (TLTHSKVICVAVWFISIIISS) form a helical membrane-spanning segment. The Extracellular segment spans residues 173–203 (PTFIFNKKYELQDRDVCEPRYRSVSEPITWK). Residues 204–230 (LLGMGLELFFGFFTPLLFMVFCYLFII) traverse the membrane as a helical segment. Over 231–246 (KTLVQAQNSKRHRAIR) the chain is Cytoplasmic. A helical transmembrane segment spans residues 247–271 (VVIAVVLVFLACQIPHNMVLLVTAV). Topologically, residues 272–295 (NTGKVGRSCSTEKVLAYTRNVAEV) are extracellular. Residues 296 to 313 (LAFLHCCLNPVLYAFIGQ) form a helical membrane-spanning segment. At 314–367 (KFRNYFMKIMKDVWCMRRKNKMPGFLCARVYSESYISRQTSETVENDNASSFTM) the chain is on the cytoplasmic side.

Belongs to the G-protein coupled receptor 1 family. Sperm. Mainly localized in the principal piece and neck region of the tail but is also found in the acrosomal region in a small percentage of sperm cells. Expressed in natural regulatory T cells (nTregs) and a subset of early thymocyte progenitor double-negative 1 (DN1) cells. Expressed in memory B cells. Expressed by IL17 producing helper T-cells (Th17), type 1 effector cells (Th1), type 2 effector cells (Th2) and regulatory T-cells (Treg) (at protein level). Expressed by Th17 cells in spleen, Peyers patches, and lamina propria of small and large intestine. Highly expressed in testis, lung, colon, and dendritic cells.

It localises to the cell membrane. It is found in the cell surface. Its function is as follows. Receptor for the C-C type chemokine CCL20. Binds to CCL20 and subsequently transduces a signal by increasing the intracellular calcium ion levels. Although CCL20 is its major ligand it can also act as a receptor for non-chemokine ligands such as beta-defensins. Binds to defensin DEFB1 leading to increase in intracellular calcium ions and cAMP levels. Its binding to DEFB1 is essential for the function of DEFB1 in regulating sperm motility and bactericidal activity. Binds to defensins DEFB4 and DEFB4A/B and mediates their chemotactic effects. The ligand-receptor pair CCL20-CCR6 is responsible for the chemotaxis of dendritic cells (DC), effector/memory T-cells and B-cells and plays an important role at skin and mucosal surfaces under homeostatic and inflammatory conditions, as well as in pathology, including cancer and various autoimmune diseases. CCR6-mediated signals are essential for immune responses to microbes in the intestinal mucosa and in the modulation of inflammatory responses initiated by tissue insult and trauma. CCR6 is essential for the recruitment of both the pro-inflammatory IL17 producing helper T-cells (Th17) and the regulatory T-cells (Treg) to sites of inflammation. Required for the normal migration of Th17 cells in Peyers patches and other related tissue sites of the intestine and plays a role in regulating effector T-cell balance and distribution in inflamed intestine. Plays an important role in the coordination of early thymocyte precursor migration events important for normal subsequent thymocyte precursor development, but is not required for the formation of normal thymic natural regulatory T-cells (nTregs). Required for optimal differentiation of DN2 and DN3 thymocyte precursors. Essential for B-cell localization in the subepithelial dome of Peyers-patches and for efficient B-cell isotype switching to IgA in the Peyers-patches. Essential for appropriate anatomical distribution of memory B-cells in the spleen and for the secondary recall response of memory B-cells. Positively regulates sperm motility and chemotaxis via its binding to CCL20. This chain is C-C chemokine receptor type 6 (Ccr6), found in Mus musculus (Mouse).